Reading from the N-terminus, the 326-residue chain is Fructose operon regulatory protein (326 aa).

The 58-residue stretch at 1 to 58 folds into the HTH lacI-type domain; the sequence is MTLDEIAKLAGVSKTTASYVINGKAQKYRISEKTQHKVMAVVEQYNFRPDHAASALRA. Positions 3–22 form a DNA-binding region, H-T-H motif; the sequence is LDEIAKLAGVSKTTASYVIN.

As to quaternary structure, homodimer.

Interaction with F1P may induce a structural change in the DNA spacer region between the -35 and -10 elements, thereby facilitating RNAP binding to the promoter to trigger the transcriptional activation of the fru operon. Interaction with F1P does not release FruR from its binding sequence. Its function is as follows. Regulates the expression of the fruBKA (fru) operon, which encodes proteins involved in the import and metabolism of fructose. In the absence of fructose 1-phosphate (F1P), binds to the promoter region of fruB, interferes with the binding of the RNA polymerase (RNAP) to the promoter and represses the expression of the operon. In the presence of F1P, activates the transcription of the fru operon by facilitating the binding of RNAP to the promoter. Essential for the expression of the fru operon and thus for growth on fructose. The sequence is that of Fructose operon regulatory protein from Vibrio cholerae serotype O1 (strain ATCC 39315 / El Tor Inaba N16961).